We begin with the raw amino-acid sequence, 555 residues long: CTP synthase (555 aa).

Positions 1–265 are amidoligase domain; sequence MTRYIFITGG…GNRVCEKLNI (265 aa). Serine 13 contacts CTP. Serine 13 serves as a coordination point for UTP. ATP contacts are provided by residues 14–19 and aspartate 71; that span reads SLGKGI. Mg(2+)-binding residues include aspartate 71 and glutamate 139. CTP contacts are provided by residues 146–148, 186–191, and lysine 222; these read DIE and KTKPTQ. UTP contacts are provided by residues 186–191 and lysine 222; that span reads KTKPTQ. Residues 290-541 enclose the Glutamine amidotransferase type-1 domain; that stretch reads TVAVVGKYVD…IKAGLAAKEA (252 aa). Glycine 351 is a binding site for L-glutamine. The active-site Nucleophile; for glutamine hydrolysis is the cysteine 378. Residues 379–382, glutamate 402, and arginine 469 contribute to the L-glutamine site; that span reads LGMQ. Catalysis depends on residues histidine 514 and glutamate 516.

Belongs to the CTP synthase family. Homotetramer.

It carries out the reaction UTP + L-glutamine + ATP + H2O = CTP + L-glutamate + ADP + phosphate + 2 H(+). The enzyme catalyses L-glutamine + H2O = L-glutamate + NH4(+). It catalyses the reaction UTP + NH4(+) + ATP = CTP + ADP + phosphate + 2 H(+). The protein operates within pyrimidine metabolism; CTP biosynthesis via de novo pathway; CTP from UDP: step 2/2. Allosterically activated by GTP, when glutamine is the substrate; GTP has no effect on the reaction when ammonia is the substrate. The allosteric effector GTP functions by stabilizing the protein conformation that binds the tetrahedral intermediate(s) formed during glutamine hydrolysis. Inhibited by the product CTP, via allosteric rather than competitive inhibition. Catalyzes the ATP-dependent amination of UTP to CTP with either L-glutamine or ammonia as the source of nitrogen. Regulates intracellular CTP levels through interactions with the four ribonucleotide triphosphates. In Coxiella burnetii (strain CbuG_Q212) (Coxiella burnetii (strain Q212)), this protein is CTP synthase.